A 555-amino-acid polypeptide reads, in one-letter code: Inositol 1,4,5-triphosphate receptor associated 2 (555 aa).

The Cytoplasmic segment spans residues 1–495 (MESTPFSGVA…LKSSIRKANK (495 aa)). Disordered stretches follow at residues 84–103 (SLPLPRHTSSTDGTITSSDP) and 128–147 (RSASPTIEAQGTSPAHDNIA). Phosphothreonine is present on Thr91. The span at 91 to 102 (TSSTDGTITSSD) shows a compositional bias: low complexity. The segment covering 129–142 (SASPTIEAQGTSPA) has biased composition (polar residues). The stretch at 227-341 (TLEKRVKLEE…LEELKQVLLQ (115 aa)) forms a coiled coil. Ser363, Ser370, and Ser424 each carry phosphoserine. Positions 437 to 469 (ELKTKDDSEPSGEETVERTRKPSLSEKKNNPSK) are disordered. Residues 451 to 465 (TVERTRKPSLSEKKN) show a composition bias toward basic and acidic residues. Residues 496 to 516 (ALWLSIAFIVLFAALMSFLTG) traverse the membrane as a helical; Anchor for type IV membrane protein segment. At 517–555 (QLFQKSVDAAPTQQEDSWTSLEHILWPFTRLRHNGPPPV) the chain is on the lumenal side.

It belongs to the IRAG2 family. Interacts (via coiled-coil domain) with ITPR3. Interacts with SUN1 and SUN2. Interacts with microtubules. Interacts with HCN4; regulates HCN4 channel activity. Post-translationally, the removal of the C-terminal lumenal domain occurs by proteolytic processing. In terms of tissue distribution, expressed at high levels in pre B-cells, mature B-cells and pre T-cells. Expressed at low levels in mature T-cells and plasma B-cells. Expressed in germinal center B-cells, splenic marginal zone cells and B-cell lymphomas. Expressed in neuronal cells in the cerebral cortex, epithelial cells in tonsil, adrenal glands, zymogen-producing cells in the stomach and epithelial cells in seminal vesicles.

It localises to the cytoplasm. It is found in the endoplasmic reticulum membrane. The protein resides in the nucleus envelope. Its subcellular location is the cytoskeleton. The protein localises to the microtubule organizing center. It localises to the centrosome. It is found in the spindle pole. The protein resides in the chromosome. In terms of biological role, plays a role in the delivery of peptides to major histocompatibility complex (MHC) class I molecules; this occurs in a transporter associated with antigen processing (TAP)-independent manner. May play a role in taste signal transduction via ITPR3. May play a role during fertilization in pronucleus congression and fusion. Plays a role in maintaining nuclear shape, maybe as a component of the LINC complex and through interaction with microtubules. Plays a role in the regulation of cellular excitability by regulating the hyperpolarization-activated cyclic nucleotide-gated HCN4 channel activity. The sequence is that of Inositol 1,4,5-triphosphate receptor associated 2 from Homo sapiens (Human).